Here is a 408-residue protein sequence, read N- to C-terminus: Peptidase T (408 aa).

Position 78 (His-78) interacts with Zn(2+). Asp-80 is an active-site residue. Zn(2+) is bound at residue Asp-140. Glu-173 (proton acceptor) is an active-site residue. Residues Glu-174, Asp-196, and His-379 each coordinate Zn(2+).

Belongs to the peptidase M20B family. Requires Zn(2+) as cofactor.

Its subcellular location is the cytoplasm. It carries out the reaction Release of the N-terminal residue from a tripeptide.. Its function is as follows. Cleaves the N-terminal amino acid of tripeptides. This chain is Peptidase T, found in Escherichia coli O9:H4 (strain HS).